Consider the following 334-residue polypeptide: Putative lysine N-acyltransferase C17G9.06c (334 aa).

Histidine 248 serves as a coordination point for substrate. The active-site Proton acceptor is the glutamate 286.

It belongs to the lysine N-acyltransferase mbtK family.

It is found in the cytoplasm. It localises to the nucleus. This chain is Putative lysine N-acyltransferase C17G9.06c, found in Schizosaccharomyces pombe (strain 972 / ATCC 24843) (Fission yeast).